Reading from the N-terminus, the 119-residue chain is Ribosome-binding factor A (119 aa).

The protein belongs to the RbfA family. In terms of assembly, monomer. Binds 30S ribosomal subunits, but not 50S ribosomal subunits or 70S ribosomes.

It is found in the cytoplasm. Functionally, one of several proteins that assist in the late maturation steps of the functional core of the 30S ribosomal subunit. Associates with free 30S ribosomal subunits (but not with 30S subunits that are part of 70S ribosomes or polysomes). Required for efficient processing of 16S rRNA. May interact with the 5'-terminal helix region of 16S rRNA. The polypeptide is Ribosome-binding factor A (Limosilactobacillus reuteri (strain DSM 20016) (Lactobacillus reuteri)).